The following is a 560-amino-acid chain: Phenol regulator MopR (560 aa).

Phenol is bound by residues His-106 and Trp-134. Cys-155, Glu-178, Cys-181, and Cys-189 together coordinate Zn(2+). The region spanning 245–474 (AVGESVAYRK…LENLLERATL (230 aa)) is the Sigma-54 factor interaction domain. Residues 273–280 (GETGVGKE) and 336–345 (AHGGTIFLDE) each bind ATP.

Homodimer.

Its activity is regulated as follows. Activity is triggered by phenol binding. In terms of biological role, involved in the regulation of the phenol degradation pathway. Activates phenol hydroxylase expression in the presence of phenol. The sequence is that of Phenol regulator MopR from Acinetobacter guillouiae (Acinetobacter genomosp. 11).